An 826-amino-acid polypeptide reads, in one-letter code: Lysine-specific histone demethylase 1B (826 aa).

Basic residues predominate over residues 1–11 (MAASRGRSKKR). Positions 1 to 46 (MAASRGRSKKRSNLELSPDNLPLRSSGRQAKKKAVEIPDEDEDGSS) are disordered. Residues Ser-17 and Ser-26 each carry the phosphoserine modification. Positions 53, 58, 65, 73, 84, 90, 92, 95, 142, 147, 169, and 185 each coordinate Zn(2+). The CW-type zinc finger occupies 133–193 (DQQLPYWVQC…HCSFPEDLRV (61 aa)). Ser-253 carries the post-translational modification Phosphoserine. Positions 279 to 298 (YQPNECGKALCVRPDVMELD) are GLYR1-binding. An SWIRM domain is found at 281–379 (PNECGKALCV…TGVLTVAAGQ (99 aa)). FAD is bound at residue 389–445 (KSVLVVGAGPAGLAAARQLHNFGMKVTVLEAKDRIGGRVWDDKSFKGVVVGRGPQIV). Histone H3-binding stretches follow at residues 444-473 (IVNGCINNPVALMCEQLGISMRKLGERCDL), 493-504 (FNALLDVVSEWR), and 544-578 (FHLSNLEYACGSSLHQVSARSWDHNEFFAQFAGDH). Residues 570–572 (FFA) form a GLYR1-binding region. FAD-binding positions include Val-604, Glu-799, and 807-809 (QTV). Positions 802–818 (NRHFPQTVTGAYLSGVR) are GLYR1-binding.

This sequence belongs to the flavin monoamine oxidase family. Interacts with its cofactor GLYR1 at nucleosomes; this interaction stimulates H3K4me1 and H3K4me2 demethylation. In contrast to KDM1A, does not form a complex with RCOR1/CoREST. Possible accessory component of the polycomb repressive deubiquitinase (PR-DUB) complex, at least composed of BAP1, one of ASXL1, ASXL2 or (probably) ASXL3 and one of MBD5 or MBD6. The PR-DUB core associates with a number of accessory proteins, including FOXK1, FOXK2, KDM1B, HCFC1 and OGT; KDM1B specifically associates with ASXL2 PR-DUB complexes. Requires FAD as cofactor. It depends on Zn(2+) as a cofactor. In terms of tissue distribution, expressed in growing oocytes and in intestinal gland.

It localises to the nucleus. The protein localises to the chromosome. It carries out the reaction N(6),N(6)-dimethyl-L-lysyl(4)-[histone H3] + 2 A + 2 H2O = L-lysyl(4)-[histone H3] + 2 formaldehyde + 2 AH2. The catalysed reaction is N(6)-methyl-L-lysyl(4)-[histone H3] + A + H2O = L-lysyl(4)-[histone H3] + formaldehyde + AH2. Inhibited by tranylcypromine, but not by pargyline, deprenyl or rasagiline. Histone H3K4me1 and H3K4me2 demethylase activity is inhibited by DNA, this inhibition is released in complex with GLYR1. Its function is as follows. Histone demethylase that demethylates 'Lys-4' of histone H3, a specific tag for epigenetic transcriptional activation, thereby acting as a corepressor. Required for de novo DNA methylation of a subset of imprinted genes during oogenesis. Acts by oxidizing the substrate by FAD to generate the corresponding imine that is subsequently hydrolyzed. Demethylates both mono- and di-methylated 'Lys-4' of histone H3. Has no effect on tri-methylated 'Lys-4', mono-, di- or tri-methylated 'Lys-9', mono-, di- or tri-methylated 'Lys-27', mono-, di- or tri-methylated 'Lys-36' of histone H3, or on mono-, di- or tri-methylated 'Lys-20' of histone H4. Functionally, histone demethylase that demethylates 'Lys-4' of histone H3, a specific tag for epigenetic transcriptional activation, thereby acting as a corepressor. Required for de novo DNA methylation of a subset of imprinted genes during oogenesis. Acts by oxidizing the substrate by FAD to generate the corresponding imine that is subsequently hydrolyzed. Demethylates both mono- and di-methylated 'Lys-4' of histone H3. Has no effect on tri-methylated 'Lys-4', mono-, di- or tri-methylated 'Lys-9', mono-, di- or tri-methylated 'Lys-27', mono-, di- or tri-methylated 'Lys-36' of histone H3, or on mono-, di- or tri-methylated 'Lys-20' of histone H4. Alone, it is unable to demethylate H3K4me on nucleosomes and requires the presence of GLYR1 to achieve such activity, they form a multifunctional enzyme complex that modifies transcribed chromatin and facilitates Pol II transcription through nucleosomes. The chain is Lysine-specific histone demethylase 1B from Mus musculus (Mouse).